A 175-amino-acid polypeptide reads, in one-letter code: Tumor necrosis factor receptor superfamily member 13C (175 aa).

Residues 1–71 (MGARRLRVRS…EGSALRPDVA (71 aa)) are Extracellular-facing. A TNFR-Cys; truncated repeat occupies 21 to 38 (QCNQTECFDPLVRNCVSC). 2 disulfides stabilise this stretch: cysteine 22/cysteine 35 and cysteine 27/cysteine 38. An N-linked (GlcNAc...) asparagine glycan is attached at asparagine 23. The tract at residues 29–34 (DPLVRN) is essential for TNFSF13B/TALL1/BAFF/BLyS binding. A helical; Signal-anchor for type III membrane protein membrane pass occupies residues 72 to 92 (LLVGAPALLGLILALTLVGLV). The Cytoplasmic portion of the chain corresponds to 93–175 (SLVSWRWRQQ…VTTKTAGPEQ (83 aa)). The tract at residues 124–175 (VPSSETPHASAPTWPPLKEDADSALPRHSVPVPATELGSTELVTTKTAGPEQ) is disordered. Residues 160 to 175 (LGSTELVTTKTAGPEQ) are compositionally biased toward polar residues.

As to expression, highly expressed in spleen and testis; detected at lower levels in lung and thymus.

It is found in the membrane. In terms of biological role, B-cell receptor specific for TNFSF13B/TALL1/BAFF/BLyS. Promotes the survival of mature B-cells and the B-cell response. The chain is Tumor necrosis factor receptor superfamily member 13C (Tnfrsf13c) from Mus musculus (Mouse).